The primary structure comprises 338 residues: Mugineic-acid 3-dioxygenase (338 aa).

The Fe2OG dioxygenase domain occupies 180 to 283 (DISGGRVVVD…RLSVASFIVP (104 aa)). Residues histidine 208, aspartate 210, and histidine 264 each contribute to the Fe cation site. A 2-oxoglutarate-binding site is contributed by arginine 274.

This sequence belongs to the iron/ascorbate-dependent oxidoreductase family. Fe(2+) serves as cofactor. It depends on L-ascorbate as a cofactor. Expressed in roots, but not in leaves.

It catalyses the reaction mugineate + 2-oxoglutarate + O2 = 3-epihydroxymugineate + succinate + CO2 + H(+). It carries out the reaction 2'-deoxymugineate + 2-oxoglutarate + O2 = 3-epihydroxy-2'-deoxymugineate + succinate + CO2 + H(+). Functionally, involved in the biosynthesis of mugineic acid family of phytosiderophores. Hydroxylates the C-3 positions of mugineic acid (MA) and 2'-deoxymugineic acid (DMA). May be involved in boron tolerance. In Hordeum vulgare (Barley), this protein is Mugineic-acid 3-dioxygenase (IDS2).